A 303-amino-acid polypeptide reads, in one-letter code: Olfactory receptor 10A2 (303 aa).

At 1 to 12 the chain is on the extracellular side; sequence MSFSSLPTEIQS. A helical membrane pass occupies residues 13-33; sequence LLFLTFLTIYLVTLMGNCLII. Residues 34–41 are Cytoplasmic-facing; sequence LVTLADPM. The chain crosses the membrane as a helical span at residues 42–62; it reads LHSPMYFFLRNLSFLEIGFNL. Topologically, residues 63 to 86 are extracellular; sequence VIVPKMLGTLLAQDTTISFLGCAT. Cysteine 84 and cysteine 176 are oxidised to a cystine. The helical transmembrane segment at 87–107 threads the bilayer; that stretch reads QMYFFFFFGVAECFLLATMAY. Topologically, residues 108 to 126 are cytoplasmic; that stretch reads DRYVAICSPLHYPVIMNQR. Residues 127–147 form a helical membrane-spanning segment; sequence TRAKLAAASWFPGFPVATVQT. Residues 148–184 lie on the Extracellular side of the membrane; that stretch reads TWLFSFPFCGTNKVNHFFCDSPPVLRLVCADTALFEI. The helical transmembrane segment at 185–204 threads the bilayer; it reads YAIVGTILVVMIPCLLILCS. The Cytoplasmic segment spans residues 205–224; sequence YTHIAAAILKIPSAKGKNKA. Residues 225–245 traverse the membrane as a helical segment; the sequence is FSTCSSHLLVVSLFYISLSLT. Topologically, residues 246 to 258 are extracellular; sequence YFRPKSNNSPEGK. The chain crosses the membrane as a helical span at residues 259-279; it reads KLLSLSYTVMTPMLNPIIYSL. Topologically, residues 280-301 are cytoplasmic; sequence RNNEVKNALSRTVSKALALRNC.

It belongs to the G-protein coupled receptor 1 family.

The protein localises to the cell membrane. Odorant receptor. The sequence is that of Olfactory receptor 10A2 (OR10A2) from Homo sapiens (Human).